The primary structure comprises 152 residues: ESAT-6 secretion machinery protein EssA (152 aa).

Over 1–114 (MLMNSVIALT…PYIQNKQEKK (114 aa)) the chain is Cytoplasmic. A helical membrane pass occupies residues 115 to 135 (IFPYILMSVGAFLTLGFVIFS). Residues 136–152 (IHKGRRTKNESARKSNI) lie on the Extracellular side of the membrane.

This sequence belongs to the EssA family.

Its subcellular location is the cell membrane. Component of the ESAT-6 secretion system (Ess). Required for the secretion of EsxA and EsxB. The protein is ESAT-6 secretion machinery protein EssA of Staphylococcus aureus (strain Mu50 / ATCC 700699).